A 624-amino-acid chain; its full sequence is Actin-related protein 8 (624 aa).

Met-1 carries the post-translational modification N-acetylmethionine. The segment covering 1–25 (MTQAEKGEAENGKEKGGEKEKEQRG) has biased composition (basic and acidic residues). The interval 1 to 29 (MTQAEKGEAENGKEKGGEKEKEQRGVKRP) is disordered. 2 residues coordinate ATP: Ser-55 and Thr-56. The residue at position 132 (Ser-132) is a Phosphoserine. An ATP-binding site is contributed by 283–286 (DVGD). Ser-412 carries the phosphoserine modification. Residues 430-462 (SKQEQSAKATADRKSASKPIGFEGDLRGQSSDL) form a disordered region.

This sequence belongs to the actin family. ARP8 subfamily. Component of the chromatin remodeling INO80 complex; specifically part of a complex module associated with the DBINO domain of INO80. Exists as monomers and dimers, but the dimer is most probably the biologically relevant form required for stable interactions with histones that exploits the twofold symmetry of the nucleosome core.

It is found in the nucleus. The protein resides in the chromosome. Functionally, plays an important role in the functional organization of mitotic chromosomes. Exhibits low basal ATPase activity, and unable to polymerize. Its function is as follows. Proposed core component of the chromatin remodeling INO80 complex which is involved in transcriptional regulation, DNA replication and probably DNA repair. Required for the recruitment of INO80 (and probably the INO80 complex) to sites of DNA damage Strongly prefer nucleosomes and H3-H4 tetramers over H2A-H2B dimers, suggesting it may act as a nucleosome recognition module within the complex. This Bos taurus (Bovine) protein is Actin-related protein 8 (ACTR8).